Reading from the N-terminus, the 593-residue chain is NADH-quinone oxidoreductase subunit C/D (593 aa).

The interval 1–184 is NADH dehydrogenase I subunit C; that stretch reads MTADNAIFIP…DPYSLTLAKQ (184 aa). The interval 208-593 is NADH dehydrogenase I subunit D; the sequence is DYMFLNLGPN…IDFVMADVDR (386 aa).

The protein in the N-terminal section; belongs to the complex I 30 kDa subunit family. It in the C-terminal section; belongs to the complex I 49 kDa subunit family. In terms of assembly, NDH-1 is composed of 13 different subunits. Subunits NuoB, CD, E, F, and G constitute the peripheral sector of the complex.

The protein localises to the cell inner membrane. The enzyme catalyses a quinone + NADH + 5 H(+)(in) = a quinol + NAD(+) + 4 H(+)(out). NDH-1 shuttles electrons from NADH, via FMN and iron-sulfur (Fe-S) centers, to quinones in the respiratory chain. The immediate electron acceptor for the enzyme in this species is believed to be ubiquinone. Couples the redox reaction to proton translocation (for every two electrons transferred, four hydrogen ions are translocated across the cytoplasmic membrane), and thus conserves the redox energy in a proton gradient. The protein is NADH-quinone oxidoreductase subunit C/D of Pseudomonas putida (strain W619).